Consider the following 196-residue polypeptide: GTP cyclohydrolase 1 (196 aa).

Zn(2+)-binding residues include C85, H88, and C156.

This sequence belongs to the GTP cyclohydrolase I family. In terms of assembly, toroid-shaped homodecamer, composed of two pentamers of five dimers.

It catalyses the reaction GTP + H2O = 7,8-dihydroneopterin 3'-triphosphate + formate + H(+). It participates in cofactor biosynthesis; 7,8-dihydroneopterin triphosphate biosynthesis; 7,8-dihydroneopterin triphosphate from GTP: step 1/1. The sequence is that of GTP cyclohydrolase 1 from Bacteroides thetaiotaomicron (strain ATCC 29148 / DSM 2079 / JCM 5827 / CCUG 10774 / NCTC 10582 / VPI-5482 / E50).